The primary structure comprises 236 residues: MVLSTLIEPLPSVQSDPIPFPSGGGIVYVITDRRAAGERALTDIVSAALRGGAHVIQLRDKDVPARDMVALGQALLPLTRDAGVPLIVNDRVDVALALDADGVHVGQDDIPAEMVRRIIGPERILGVSVATVEQAQRAMDAGATYVSVGDLFGTPSKPDAGPPIGLEPLAEIARTVNLPVLGIGGINLANAASVIRAGAVGVAVISAVIGAPDPEAATRALHAVIASALDERARAG.

4-amino-2-methyl-5-(diphosphooxymethyl)pyrimidine-binding positions include 57-61 and N89; that span reads QLRDK. D90 and D109 together coordinate Mg(2+). 4-amino-2-methyl-5-(diphosphooxymethyl)pyrimidine is bound at residue S128. 2-[(2R,5Z)-2-carboxy-4-methylthiazol-5(2H)-ylidene]ethyl phosphate is bound at residue 154–156; the sequence is TPS. K157 contributes to the 4-amino-2-methyl-5-(diphosphooxymethyl)pyrimidine binding site. Residues G185 and 205–206 each bind 2-[(2R,5Z)-2-carboxy-4-methylthiazol-5(2H)-ylidene]ethyl phosphate; that span reads IS.

The protein belongs to the thiamine-phosphate synthase family. The cofactor is Mg(2+).

The catalysed reaction is 2-[(2R,5Z)-2-carboxy-4-methylthiazol-5(2H)-ylidene]ethyl phosphate + 4-amino-2-methyl-5-(diphosphooxymethyl)pyrimidine + 2 H(+) = thiamine phosphate + CO2 + diphosphate. It carries out the reaction 2-(2-carboxy-4-methylthiazol-5-yl)ethyl phosphate + 4-amino-2-methyl-5-(diphosphooxymethyl)pyrimidine + 2 H(+) = thiamine phosphate + CO2 + diphosphate. It catalyses the reaction 4-methyl-5-(2-phosphooxyethyl)-thiazole + 4-amino-2-methyl-5-(diphosphooxymethyl)pyrimidine + H(+) = thiamine phosphate + diphosphate. Its pathway is cofactor biosynthesis; thiamine diphosphate biosynthesis; thiamine phosphate from 4-amino-2-methyl-5-diphosphomethylpyrimidine and 4-methyl-5-(2-phosphoethyl)-thiazole: step 1/1. Functionally, condenses 4-methyl-5-(beta-hydroxyethyl)thiazole monophosphate (THZ-P) and 2-methyl-4-amino-5-hydroxymethyl pyrimidine pyrophosphate (HMP-PP) to form thiamine monophosphate (TMP). The sequence is that of Thiamine-phosphate synthase from Roseiflexus sp. (strain RS-1).